The following is a 63-amino-acid chain: Large ribosomal subunit protein uL29 (63 aa).

Belongs to the universal ribosomal protein uL29 family.

The polypeptide is Large ribosomal subunit protein uL29 (Pectobacterium carotovorum subsp. carotovorum (strain PC1)).